The sequence spans 415 residues: Small ribosomal subunit protein uS5m (415 aa).

The disordered stretch occupies residues methionine 1–valine 31. The region spanning phenylalanine 131–valine 197 is the S5 DRBM domain. The tract at residues glycine 396–aspartate 415 is disordered.

Belongs to the universal ribosomal protein uS5 family. As to quaternary structure, component of the mitochondrial ribosome small subunit (28S) which comprises a 12S rRNA and about 30 distinct proteins.

The protein localises to the mitochondrion. This Caenorhabditis briggsae protein is Small ribosomal subunit protein uS5m (mrps-5).